The chain runs to 402 residues: Serine--glyoxylate aminotransferase (402 aa).

Lys201 carries the N6-(pyridoxal phosphate)lysine modification.

It belongs to the class-V pyridoxal-phosphate-dependent aminotransferase family. The cofactor is pyridoxal 5'-phosphate.

The enzyme catalyses glyoxylate + L-serine = 3-hydroxypyruvate + glycine. It participates in one-carbon metabolism; formaldehyde assimilation via serine pathway. The sequence is that of Serine--glyoxylate aminotransferase from Methylorubrum extorquens (strain ATCC 14718 / DSM 1338 / JCM 2805 / NCIMB 9133 / AM1) (Methylobacterium extorquens).